Consider the following 439-residue polypeptide: O-methyltransferase aurJ (439 aa).

An S-adenosyl-L-methionine-binding site is contributed by D283. The active-site Proton acceptor is the H338.

This sequence belongs to the class I-like SAM-binding methyltransferase superfamily. Cation-independent O-methyltransferase family. COMT subfamily.

It catalyses the reaction norrubrofusarin + S-adenosyl-L-methionine = rubrofusarin + S-adenosyl-L-homocysteine + H(+). It functions in the pathway pigment biosynthesis. O-methyltransferase; part of the gene cluster that mediates the biosynthesis of aurofusarin, a red mycelium pigment which is acting as a mycotoxin. The first step is performed by the polyketide synthase which condenses one acetyl-CoA and 6 malonyl-CoA units to form the first intermediate, the cyclic heptaketide and yellow pigment YWA1. The C2 hydroxyl group in the pyrone ring of YWA1 is probably formed during ring closure by an aldol-type cyclization reaction. The dehydratase aurZ then acts as the first tailoring enzyme in the aurofusarin biosynthetic pathway by converting YWA1 to nor-rubrofusarin. Nor-rubrofusarin is then methylated to rubrofusarin by the O-methyltransferase aurJ. Rubrofusarin is then transported across the plasma membrane by the rubrofusarin-specific pump aurT for further enzymatic processing by the extracellular complex composed of GIP1, aurF, aurO and aurS to yield aurofusarin. The sequence is that of O-methyltransferase aurJ from Gibberella zeae (strain ATCC MYA-4620 / CBS 123657 / FGSC 9075 / NRRL 31084 / PH-1) (Wheat head blight fungus).